Here is a 474-residue protein sequence, read N- to C-terminus: MPRLIKDRVPTPERSVGERVRDFGEVNLGYSWELALREAERCLQCPVEYAPCIKGCPVHINIPGFIKALRENRDNPSKAVREALRIIWRDNTLPAITGRVCPQEEQCEGACVVGKVGDPINIGKLERFVADYAREHGIDDELLLEEIKGIKRNGKKVAIIGAGPAGLTCAADLAKMGYEVTIYEALHQPGGVLIYGIPEFRLPKEIVKKELENLRRLGVKIETNVLVGKTITFEELREEYDAIFIGTGAGTPRIYPWPGVNLNGIYSANEFLTRINLMKAYKFPEYDTPIKVGKRVAVIGGGNTAMDAARSALRLGAEVWILYRRTRKEMTAREEEIKHAEEEGVKFMFLVTPKRFIGDENGNLKAIELEKMKLGEPDESGRRRPIPTGETFIMEFDTAIIAIGQTPNKTFLETVPGLKVDEWGRIVVDENLMTSIPGVFAGGDAIRGEATVILAMGDGRKAAKAIHQYLSKEK.

The propeptide occupies 1–2; it reads MP. [4Fe-4S] cluster is bound by residues Cys42, Cys45, Cys52, and Cys56. Cys101, Cys107, and Cys111 together coordinate [3Fe-4S] cluster.

Heterodimer of alpha and beta subunits. FAD is required as a cofactor. Requires [3Fe-4S] cluster as cofactor. It depends on [4Fe-4S] cluster as a cofactor.

It is found in the cytoplasm. It carries out the reaction n sulfur + hydrogen sulfide + NADP(+) = (n+1) sulfur + NADPH. The enzyme catalyses 2 reduced [2Fe-2S]-[ferredoxin] + NADP(+) + H(+) = 2 oxidized [2Fe-2S]-[ferredoxin] + NADPH. Its function is as follows. A bifunctional enzyme that catalyzes the reduction of elemental sulfur or polysulfide to hydrogen sulfide with NADPH as electron donor. Also functions as a reduced ferredoxin:NADP oxidoreductase with a very high affinity for reduced ferredoxin. Exhibits a broad specificity for various physiological and non-physiological substrates with varied reduction potentials such as methyl viologen, benzyl viologen, FAD, FMN, methylene blue, 2,6-dichlorophenolindophenol (DCIP), cytochrome C and ferricyanide with highest preference for benzyl viologen. Does not reduce fumarate, succinate, nitrate, nitrite, sulfate, sulfite or protons. Does not possess any hydrogenase activity or NADPH-dependent glutamate synthase activity. In Pyrococcus furiosus (strain ATCC 43587 / DSM 3638 / JCM 8422 / Vc1), this protein is Sulfide dehydrogenase subunit alpha.